The chain runs to 926 residues: Vacuolar protein sorting-associated protein 39 homolog (926 aa).

A CNH domain is found at P15–Q306. The stretch at D590 to Q768 is one CHCR repeat.

It belongs to the VAM6/VPS39 family. Probable core component of the homotypic fusion and vacuole protein sorting (HOPS) complex consisting of the core class C Vps proteins vps-11, vps-16, vps-18, and which further associates with vps-33.1, vps-39 and vps-41. May interact with lgg-2. Interacts with cuti-1.

Its subcellular location is the cytoplasm. The protein resides in the lysosome membrane. It localises to the late endosome membrane. It is found in the late endosome. The protein localises to the lysosome. Its function is as follows. Plays a role in vesicle-mediated protein trafficking to lysosomal compartments including the endocytic membrane transport and autophagic pathways. Believed to act in part as a component of the putative HOPS endosomal tethering complex which is proposed to be involved in the rab-5-to-rab-7 endosome conversion probably implicating sand-1, and via binding SNAREs and SNARE complexes to mediate tethering and docking events during SNARE-mediated membrane fusion. The HOPS complex is proposed to be recruited to rab-7 on the late endosomal membrane and to regulate late endocytic, phagocytic and autophagic traffic towards lysosomes. Involved in homotypic vesicle fusions between late endosomes and in heterotypic fusions between late endosomes and lysosomes. Required for fusion of endosomes. In association with lgg-2 mediates the tethering of autophagosomes with lysosomes to form autolysosomes. Within the HOPS complex, contributes to the normal development of gut granules in embryonic and adult intestinal cells. This Caenorhabditis elegans protein is Vacuolar protein sorting-associated protein 39 homolog.